The sequence spans 145 residues: Transcriptional regulator SlyA (145 aa).

The region spanning 2–135 (ELPLGSDLAR…LALLVARLEK (134 aa)) is the HTH marR-type domain. Residues 49 to 72 (QIQLAKAIGIEQPSLVRTLDQLEE) constitute a DNA-binding region (H-T-H motif).

This sequence belongs to the SlyA family. Homodimer.

Its function is as follows. Transcription regulator that can specifically activate or repress expression of target genes. The chain is Transcriptional regulator SlyA from Pectobacterium carotovorum subsp. carotovorum (strain PC1).